The sequence spans 156 residues: Small ribosomal subunit protein uS7 (156 aa).

It belongs to the universal ribosomal protein uS7 family. Part of the 30S ribosomal subunit. Contacts proteins S9 and S11.

Functionally, one of the primary rRNA binding proteins, it binds directly to 16S rRNA where it nucleates assembly of the head domain of the 30S subunit. Is located at the subunit interface close to the decoding center, probably blocks exit of the E-site tRNA. The sequence is that of Small ribosomal subunit protein uS7 from Acholeplasma laidlawii (strain PG-8A).